The chain runs to 174 residues: Shikimate kinase 2 (174 aa).

Residue 12 to 17 coordinates ATP; sequence GCGKTT. Mg(2+)-binding residues include Thr16 and Asp32. Substrate is bound by residues Asp34, Arg58, and Gly79. Residues 112 to 126 are LID domain; the sequence is QAAPEEDLRPTLTGK. Arg120 provides a ligand contact to ATP. Residue Arg139 participates in substrate binding.

Belongs to the shikimate kinase family. AroL subfamily. Monomer. The cofactor is Mg(2+).

It localises to the cytoplasm. It catalyses the reaction shikimate + ATP = 3-phosphoshikimate + ADP + H(+). It functions in the pathway metabolic intermediate biosynthesis; chorismate biosynthesis; chorismate from D-erythrose 4-phosphate and phosphoenolpyruvate: step 5/7. Catalyzes the specific phosphorylation of the 3-hydroxyl group of shikimic acid using ATP as a cosubstrate. The protein is Shikimate kinase 2 of Shigella dysenteriae serotype 1 (strain Sd197).